A 483-amino-acid polypeptide reads, in one-letter code: Sodium/pantothenate symporter (483 aa).

Residues 1–2 (MQ) are Periplasmic-facing. Residues 3-23 (LEVILPLVAYLVVVFGISVYA) form a helical membrane-spanning segment. At 24–42 (MRKRSTGTFLNEYFLGSRS) the chain is on the cytoplasmic side. The chain crosses the membrane as a helical span at residues 43 to 63 (MGGIVLAMTLTATYISASSFI). At 64 to 73 (GGPGAAYKYG) the chain is on the periplasmic side. Residues 74–94 (LGWVLLAMIQLPAVWLSLGIL) traverse the membrane as a helical segment. Residues 95-123 (GKKFAILARRYNAVTLNDMLFARYQSRLL) lie on the Cytoplasmic side of the membrane. A helical membrane pass occupies residues 124 to 144 (VWLASLSLLVAFVGAMTVQFI). Residues 145–157 (GGARLLETAAGIP) lie on the Periplasmic side of the membrane. A helical transmembrane segment spans residues 158 to 178 (YETGLLIFGISIALYTAFGGF). Residues 179-189 (RASVLNDTMQG) lie on the Cytoplasmic side of the membrane. A helical membrane pass occupies residues 190-210 (LVMLIGTVVLLIGVVHAAGGL). Topologically, residues 211–232 (SNAVQTLQTIDPQLVTPQGADD) are periplasmic. The chain crosses the membrane as a helical span at residues 233–253 (ILSPAFMTSFWVLVCFGVIGL). Residues 254-272 (PHTAVRCISYKDSKAVHRG) lie on the Cytoplasmic side of the membrane. The chain crosses the membrane as a helical span at residues 273–293 (IIIGTIVVAILMFGMHLAGAL). The Periplasmic segment spans residues 294 to 305 (GRAVIPDLTVPD). A helical membrane pass occupies residues 306 to 326 (LVIPTLMVKVLPPFAAGIFLA). The Cytoplasmic portion of the chain corresponds to 327–368 (APMAAIMSTINAQLLQSSATIIKDLYLNIRPDQMQNETRLKR). Residues 369–389 (MSAVITLVLGALLLLAAWKPP) form a helical membrane-spanning segment. At 390 to 391 (EM) the chain is on the periplasmic side. A helical transmembrane segment spans residues 392–412 (IIWLNLLAFGGLEAVFLWPLV). At 413 to 423 (LGLYWERANAK) the chain is on the cytoplasmic side. The chain crosses the membrane as a helical span at residues 424 to 444 (GALSAMIVGGVLYAVLATLNI). Glutamine 445 is a topological domain (periplasmic). Residues 446–466 (YLGFHPIVPSLLLSLLAFLVG) traverse the membrane as a helical segment. The Cytoplasmic portion of the chain corresponds to 467-483 (NRFGTSVPQATVLTTDK).

The protein belongs to the sodium:solute symporter (SSF) (TC 2.A.21) family.

The protein resides in the cell inner membrane. The enzyme catalyses (R)-pantothenate(in) + Na(+)(in) = (R)-pantothenate(out) + Na(+)(out). Pantothenate uptake is not reduced in osmotically shocked cells or by ATP depletion with arsenate, but is reduced greater than 90% by the dissipation of the membrane electrochemical gradient with 2,4-dinitrophenol. In terms of biological role, catalyzes the sodium-dependent uptake of extracellular pantothenate. The protein is Sodium/pantothenate symporter of Escherichia coli (strain K12).